The following is a 559-amino-acid chain: TBC1 domain family member 24 (559 aa).

A 1,2-diacyl-sn-glycero-3-phospho-(1D-myo-inositol)-binding positions include K36, R40, K238, R242, and 293 to 297 (RLFSR). Positions 47-262 (SHALRGKVYQ…KVRAGQPLES (216 aa)) constitute a Rab-GAP TBC domain. Residues 343-554 (EIVSVREMRD…IAAVEAWGFQ (212 aa)) enclose the TLDc domain. A phosphoserine mark is found at S473 and S480.

As to quaternary structure, interacts with ARF6. As to expression, highest expression in brain.

The protein localises to the cell membrane. Its subcellular location is the cytoplasm. The protein resides in the cytoplasmic vesicle membrane. It is found in the presynapse. Functionally, may act as a GTPase-activating protein for Rab family protein(s). Involved in neuronal projections development, probably through a negative modulation of ARF6 function. Involved in the regulation of synaptic vesicle trafficking. The chain is TBC1 domain family member 24 (TBC1D24) from Homo sapiens (Human).